The following is a 379-amino-acid chain: Tryptophan 2,3-dioxygenase (379 aa).

Substrate is bound by residues 57–61 and R128; that span reads FIITH. Residue H312 coordinates heme. Residue T327 participates in substrate binding.

It belongs to the tryptophan 2,3-dioxygenase family. In terms of assembly, homotetramer. Dimer of dimers. Heme is required as a cofactor.

The enzyme catalyses L-tryptophan + O2 = N-formyl-L-kynurenine. The protein operates within amino-acid degradation; L-tryptophan degradation via kynurenine pathway; L-kynurenine from L-tryptophan: step 1/2. It functions in the pathway pigment biosynthesis; ommochrome biosynthesis. Its function is as follows. Heme-dependent dioxygenase that catalyzes the oxidative cleavage of the L-tryptophan (L-Trp) pyrrole ring and converts L-tryptophan to N-formyl-L-kynurenine. Catalyzes the oxidative cleavage of the indole moiety. Required during larval growth to control the level of potentially harmful free tryptophan in the hemolymph. In the adult the same reaction is the first step in the ommochrome biosynthetic pathway. In Drosophila melanogaster (Fruit fly), this protein is Tryptophan 2,3-dioxygenase.